The chain runs to 442 residues: Chromosomal replication initiator protein DnaA (442 aa).

The segment at 1-75 (MDAWPRCLER…GNGEVALAVG (75 aa)) is domain I, interacts with DnaA modulators. The segment at 75 to 104 (GSRPRAPEPLPAPQAVASAPAAAPIVPFAG) is domain II. The interval 105–322 (NLDSHYTFAN…GALNTLVARA (218 aa)) is domain III, AAA+ region. 4 residues coordinate ATP: Gly150, Gly152, Lys153, and Thr154. The segment at 323 to 442 (NFTGRSITVE…WEKLIRKLSE (120 aa)) is domain IV, binds dsDNA.

The protein belongs to the DnaA family. As to quaternary structure, oligomerizes as a right-handed, spiral filament on DNA at oriC.

Its subcellular location is the cytoplasm. Its function is as follows. Plays an essential role in the initiation and regulation of chromosomal replication. ATP-DnaA binds to the origin of replication (oriC) to initiate formation of the DNA replication initiation complex once per cell cycle. Binds the DnaA box (a 9 base pair repeat at the origin) and separates the double-stranded (ds)DNA. Forms a right-handed helical filament on oriC DNA; dsDNA binds to the exterior of the filament while single-stranded (ss)DNA is stabiized in the filament's interior. The ATP-DnaA-oriC complex binds and stabilizes one strand of the AT-rich DNA unwinding element (DUE), permitting loading of DNA polymerase. After initiation quickly degrades to an ADP-DnaA complex that is not apt for DNA replication. Binds acidic phospholipids. This Xanthomonas campestris pv. campestris (strain 8004) protein is Chromosomal replication initiator protein DnaA.